Here is a 62-residue protein sequence, read N- to C-terminus: Photosystem II reaction center protein Z (62 aa).

The next 2 helical transmembrane spans lie at Ala-8–Ala-28 and Phe-41–Val-61.

Belongs to the PsbZ family. PSII is composed of 1 copy each of membrane proteins PsbA, PsbB, PsbC, PsbD, PsbE, PsbF, PsbH, PsbI, PsbJ, PsbK, PsbL, PsbM, PsbT, PsbY, PsbZ, Psb30/Ycf12, at least 3 peripheral proteins of the oxygen-evolving complex and a large number of cofactors. It forms dimeric complexes.

The protein resides in the plastid. It is found in the chloroplast thylakoid membrane. Its function is as follows. May control the interaction of photosystem II (PSII) cores with the light-harvesting antenna, regulates electron flow through the 2 photosystem reaction centers. PSII is a light-driven water plastoquinone oxidoreductase, using light energy to abstract electrons from H(2)O, generating a proton gradient subsequently used for ATP formation. The protein is Photosystem II reaction center protein Z of Nephroselmis olivacea (Green alga).